Here is a 645-residue protein sequence, read N- to C-terminus: Threonine--tRNA ligase (645 aa).

The TGS domain maps to 1–63 (MEQINIQFPD…ETDGSIGIVT (63 aa)). Residues 242–540 (DHRKIGKELE…LTEETKGAFP (299 aa)) form a catalytic region. Zn(2+) is bound by residues C336, H387, and H517.

This sequence belongs to the class-II aminoacyl-tRNA synthetase family. As to quaternary structure, homodimer. It depends on Zn(2+) as a cofactor.

The protein localises to the cytoplasm. The enzyme catalyses tRNA(Thr) + L-threonine + ATP = L-threonyl-tRNA(Thr) + AMP + diphosphate + H(+). In terms of biological role, catalyzes the attachment of threonine to tRNA(Thr) in a two-step reaction: L-threonine is first activated by ATP to form Thr-AMP and then transferred to the acceptor end of tRNA(Thr). Also edits incorrectly charged L-seryl-tRNA(Thr). This chain is Threonine--tRNA ligase, found in Staphylococcus aureus (strain Mu3 / ATCC 700698).